The primary structure comprises 104 residues: SOSS complex subunit C (104 aa).

Belongs to the SOSS-C family. Belongs to the multiprotein complex Integrator. Component of the SOSS complex, composed of SOSS-B (SOSS-B1/NABP2 or SOSS-B2/NABP1), SOSS-A/INTS3 and SOSS-C/INIP.

The protein resides in the nucleus. Component of the SOSS complex, a multiprotein complex that functions downstream of the MRN complex to promote DNA repair and G2/M checkpoint. The SOSS complex associates with single-stranded DNA at DNA lesions and influences diverse endpoints in the cellular DNA damage response including cell-cycle checkpoint activation, recombinational repair and maintenance of genomic stability. Required for efficient homologous recombination-dependent repair of double-strand breaks (DSBs). In Taeniopygia guttata (Zebra finch), this protein is SOSS complex subunit C (INIP).